Consider the following 78-residue polypeptide: Large ribosomal subunit protein bL28 (78 aa).

This sequence belongs to the bacterial ribosomal protein bL28 family.

The sequence is that of Large ribosomal subunit protein bL28 from Methylobacillus flagellatus (strain ATCC 51484 / DSM 6875 / VKM B-1610 / KT).